A 78-amino-acid polypeptide reads, in one-letter code: D-alanyl carrier protein (78 aa).

In terms of domain architecture, Carrier spans 1 to 78; that stretch reads MAFRENVLEI…MIITQLEALK (78 aa). Ser-36 carries the post-translational modification O-(pantetheine 4'-phosphoryl)serine.

Belongs to the DltC family. 4'-phosphopantetheine is transferred from CoA to a specific serine of apo-DCP.

The protein resides in the cytoplasm. The protein operates within cell wall biogenesis; lipoteichoic acid biosynthesis. Carrier protein involved in the D-alanylation of lipoteichoic acid (LTA). The loading of thioester-linked D-alanine onto DltC is catalyzed by D-alanine--D-alanyl carrier protein ligase DltA. The DltC-carried D-alanyl group is further transferred to cell membrane phosphatidylglycerol (PG) by forming an ester bond, probably catalyzed by DltD. D-alanylation of LTA plays an important role in modulating the properties of the cell wall in Gram-positive bacteria, influencing the net charge of the cell wall. This is D-alanyl carrier protein from Listeria monocytogenes serotype 4b (strain CLIP80459).